We begin with the raw amino-acid sequence, 537 residues long: Mitochondria-eating protein (537 aa).

The segment at 1–270 (MAESLKKLAK…SHSRSRSHSR (270 aa)) is interaction with YWHAG/14-3-3 protein gamma. A phosphoserine mark is found at S13, S85, S123, S127, S154, and S157. The interval 109–150 (SKNRDNSPDQDQHQSDNESFSETQPTQVQDDLAESGKSLEGA) is disordered. Residues 110 to 124 (KNRDNSPDQDQHQSD) show a composition bias toward basic and acidic residues. A compositionally biased stretch (polar residues) spans 125–137 (NESFSETQPTQVQ). 2 coiled-coil regions span residues 152 to 184 (NGST…ARHK) and 210 to 243 (QDVV…RSAR). 2 disordered regions span residues 171–212 (QLKS…PQDV) and 233–291 (EKSG…RAKM). Basic and acidic residues predominate over residues 179–209 (EDARHKTSENRRSEALKSDHRSTKRTQDQRP). The segment covering 239 to 251 (GRSARSPSPSTGT) has biased composition (low complexity). Basic residues predominate over residues 252-269 (RSHRRGRSRSHSRSRSHS). 3 positions are modified to phosphoserine: S283, S285, and S508.

It belongs to the MIEAP family. In terms of assembly, interacts (via coiled-coil domains) with BNIP3L (via BH3 domain). Interacts (via coiled-coil domains) with BNIP3 (via BH3 domain). Interacts with YWHAG/14-3-3 protein gamma; a protein that also plays a role in MALM. As to expression, in testis, expressed primarily in spermatids.

Its subcellular location is the cytoplasm. The protein localises to the cytosol. It localises to the mitochondrion outer membrane. It is found in the mitochondrion matrix. Functionally, key regulator of mitochondrial quality that mediates the repairing or degradation of unhealthy mitochondria in response to mitochondrial damage. Mediator of mitochondrial protein catabolic process (also named MALM) by mediating the degradation of damaged proteins inside mitochondria by promoting the accumulation in the mitochondrial matrix of hydrolases that are characteristic of the lysosomal lumen. Also involved in mitochondrion degradation of damaged mitochondria by promoting the formation of vacuole-like structures (named MIV), which engulf and degrade unhealthy mitochondria by accumulating lysosomes. The physical interaction of SPATA18/MIEAP, BNIP3 and BNIP3L/NIX at the mitochondrial outer membrane regulates the opening of a pore in the mitochondrial double membrane in order to mediate the translocation of lysosomal proteins from the cytoplasm to the mitochondrial matrix. Binds cardiolipin. May form molecular condensates (non-membrane-bounded organelles) within mitochondria that compartmentalize and promote cardiolipin metabolism. This Mus musculus (Mouse) protein is Mitochondria-eating protein (Spata18).